The chain runs to 448 residues: ATP-dependent protease ATPase subunit HslU (448 aa).

Residues Ile-18, 60-65 (GVGKTE), Asp-261, Glu-326, and Arg-398 each bind ATP.

Belongs to the ClpX chaperone family. HslU subfamily. In terms of assembly, a double ring-shaped homohexamer of HslV is capped on each side by a ring-shaped HslU homohexamer. The assembly of the HslU/HslV complex is dependent on binding of ATP.

Its subcellular location is the cytoplasm. ATPase subunit of a proteasome-like degradation complex; this subunit has chaperone activity. The binding of ATP and its subsequent hydrolysis by HslU are essential for unfolding of protein substrates subsequently hydrolyzed by HslV. HslU recognizes the N-terminal part of its protein substrates and unfolds these before they are guided to HslV for hydrolysis. The protein is ATP-dependent protease ATPase subunit HslU of Paraburkholderia phytofirmans (strain DSM 17436 / LMG 22146 / PsJN) (Burkholderia phytofirmans).